Consider the following 385-residue polypeptide: UPF0284 protein P9215_05181 (385 aa).

It belongs to the UPF0284 family.

The protein is UPF0284 protein P9215_05181 of Prochlorococcus marinus (strain MIT 9215).